A 1230-amino-acid polypeptide reads, in one-letter code: ATP-dependent helicase/nuclease subunit A (1230 aa).

Positions 9–480 (STWTDDQWKA…IDLNKNFRSR (472 aa)) constitute a UvrD-like helicase ATP-binding domain. 30-37 (AAAGSGKT) is an ATP binding site. One can recognise a UvrD-like helicase C-terminal domain in the interval 507-796 (QAELKLGASY…RLMTIHSSKG (290 aa)).

This sequence belongs to the helicase family. AddA subfamily. As to quaternary structure, heterodimer of AddA and AddB/RexB. Mg(2+) serves as cofactor.

It carries out the reaction Couples ATP hydrolysis with the unwinding of duplex DNA by translocating in the 3'-5' direction.. It catalyses the reaction ATP + H2O = ADP + phosphate + H(+). In terms of biological role, the heterodimer acts as both an ATP-dependent DNA helicase and an ATP-dependent, dual-direction single-stranded exonuclease. Recognizes the chi site generating a DNA molecule suitable for the initiation of homologous recombination. The AddA nuclease domain is required for chi fragment generation; this subunit has the helicase and 3' -&gt; 5' nuclease activities. The sequence is that of ATP-dependent helicase/nuclease subunit A from Bacillus licheniformis (strain ATCC 14580 / DSM 13 / JCM 2505 / CCUG 7422 / NBRC 12200 / NCIMB 9375 / NCTC 10341 / NRRL NRS-1264 / Gibson 46).